The sequence spans 423 residues: UPF0229 protein PSPTO_0546 (423 aa).

The interval 65–110 (HHGRGGKQTVVHPGNKEFTTGEHIARPQGGAGGKGPGKAGNSGEGM) is disordered. Positions 93–107 (GGAGGKGPGKAGNSG) are enriched in gly residues.

This sequence belongs to the UPF0229 family.

This chain is UPF0229 protein PSPTO_0546, found in Pseudomonas syringae pv. tomato (strain ATCC BAA-871 / DC3000).